Here is an 87-residue protein sequence, read N- to C-terminus: Small ribosomal subunit protein uS17 (87 aa).

Belongs to the universal ribosomal protein uS17 family. Part of the 30S ribosomal subunit.

In terms of biological role, one of the primary rRNA binding proteins, it binds specifically to the 5'-end of 16S ribosomal RNA. The polypeptide is Small ribosomal subunit protein uS17 (Cytophaga hutchinsonii (strain ATCC 33406 / DSM 1761 / CIP 103989 / NBRC 15051 / NCIMB 9469 / D465)).